The following is a 444-amino-acid chain: C4-dicarboxylate transport protein (444 aa).

The next 9 helical transmembrane spans lie at 18–40, 53–75, 90–112, 142–159, 163–180, 201–222, 232–254, 327–349, and 364–386; these read FYSHLYVQVLVAIAAGILLGHFY, AFIKLVKMIIAPVIFLTVATGIA, AMLYFLTFSTLALIIGLIVANVV, IVGFLTNIIPTTIVGAFA, ILQVLFFSVLFGIALAMV, LVAILMKAAPIGAFGAMAFTIG, LAMLIGTFYITSLLFVFIVLGAV, LFIAQATGIHLSWGDQILLLLVA, and FITLAATLSVVPSVPVAGMALIL.

This sequence belongs to the dicarboxylate/amino acid:cation symporter (DAACS) (TC 2.A.23) family.

The protein resides in the cell inner membrane. In terms of biological role, responsible for the transport of dicarboxylates such as succinate, fumarate, and malate from the periplasm across the inner membrane. This transport system plays an important role in the energy supply of rhizobium-legume symbionts. The sequence is that of C4-dicarboxylate transport protein (dctA) from Rhizobium leguminosarum.